We begin with the raw amino-acid sequence, 159 residues long: Small ribosomal subunit protein uS4 (159 aa).

The S4 RNA-binding domain maps to 106-158 (RRLQTIVYRKGLAKSIYHARQLVVHGHVAVAGRRVTSPGFLVPRDLEDKITLI).

Belongs to the universal ribosomal protein uS4 family. As to quaternary structure, part of the 30S ribosomal subunit. Contacts protein S5. The interaction surface between S4 and S5 is involved in control of translational fidelity.

Its function is as follows. One of the primary rRNA binding proteins, it binds directly to 16S rRNA where it nucleates assembly of the body of the 30S subunit. Functionally, with S5 and S12 plays an important role in translational accuracy. This is Small ribosomal subunit protein uS4 from Pyrobaculum islandicum (strain DSM 4184 / JCM 9189 / GEO3).